The primary structure comprises 243 residues: 1-(5-phosphoribosyl)-5-[(5-phosphoribosylamino)methylideneamino] imidazole-4-carboxamide isomerase (243 aa).

Catalysis depends on D10, which acts as the Proton acceptor. D129 (proton donor) is an active-site residue.

This sequence belongs to the HisA/HisF family.

The protein resides in the cytoplasm. The catalysed reaction is 1-(5-phospho-beta-D-ribosyl)-5-[(5-phospho-beta-D-ribosylamino)methylideneamino]imidazole-4-carboxamide = 5-[(5-phospho-1-deoxy-D-ribulos-1-ylimino)methylamino]-1-(5-phospho-beta-D-ribosyl)imidazole-4-carboxamide. The protein operates within amino-acid biosynthesis; L-histidine biosynthesis; L-histidine from 5-phospho-alpha-D-ribose 1-diphosphate: step 4/9. The chain is 1-(5-phosphoribosyl)-5-[(5-phosphoribosylamino)methylideneamino] imidazole-4-carboxamide isomerase from Saccharopolyspora erythraea (strain ATCC 11635 / DSM 40517 / JCM 4748 / NBRC 13426 / NCIMB 8594 / NRRL 2338).